We begin with the raw amino-acid sequence, 269 residues long: Phosphate import ATP-binding protein PstB (269 aa).

One can recognise an ABC transporter domain in the interval Leu14–Ser253. Gly46–Ser53 contributes to the ATP binding site.

This sequence belongs to the ABC transporter superfamily. Phosphate importer (TC 3.A.1.7) family. In terms of assembly, the complex is composed of two ATP-binding proteins (PstB), two transmembrane proteins (PstC and PstA) and a solute-binding protein (PstS).

It localises to the cell inner membrane. It carries out the reaction phosphate(out) + ATP + H2O = ADP + 2 phosphate(in) + H(+). Its function is as follows. Part of the ABC transporter complex PstSACB involved in phosphate import. Responsible for energy coupling to the transport system. This is Phosphate import ATP-binding protein PstB from Prochlorococcus marinus subsp. pastoris (strain CCMP1986 / NIES-2087 / MED4).